The primary structure comprises 94 residues: Progonadoliberin-3 (94 aa).

A signal peptide spans 1 to 23; it reads MEWKGRVLVQLLMLVCVLEVSLC. At glutamine 24 the chain carries Pyrrolidone carboxylic acid. Glycine 33 carries the glycine amide modification.

Belongs to the GnRH family.

The protein resides in the secreted. Its function is as follows. Stimulates the secretion of gonadotropins. The protein is Progonadoliberin-3 (gnrh3) of Rutilus rutilus (Roach).